Reading from the N-terminus, the 315-residue chain is Acetyl-coenzyme A carboxylase carboxyl transferase subunit alpha (315 aa).

In terms of domain architecture, CoA carboxyltransferase C-terminal spans 32-293; sequence NISDEIARLQ…RADLVQQLDM (262 aa).

Belongs to the AccA family. As to quaternary structure, acetyl-CoA carboxylase is a heterohexamer composed of biotin carboxyl carrier protein (AccB), biotin carboxylase (AccC) and two subunits each of ACCase subunit alpha (AccA) and ACCase subunit beta (AccD).

It localises to the cytoplasm. It catalyses the reaction N(6)-carboxybiotinyl-L-lysyl-[protein] + acetyl-CoA = N(6)-biotinyl-L-lysyl-[protein] + malonyl-CoA. It participates in lipid metabolism; malonyl-CoA biosynthesis; malonyl-CoA from acetyl-CoA: step 1/1. Its function is as follows. Component of the acetyl coenzyme A carboxylase (ACC) complex. First, biotin carboxylase catalyzes the carboxylation of biotin on its carrier protein (BCCP) and then the CO(2) group is transferred by the carboxyltransferase to acetyl-CoA to form malonyl-CoA. The chain is Acetyl-coenzyme A carboxylase carboxyl transferase subunit alpha from Pseudomonas putida (strain ATCC 47054 / DSM 6125 / CFBP 8728 / NCIMB 11950 / KT2440).